Reading from the N-terminus, the 223-residue chain is ATP-dependent dethiobiotin synthetase BioD (223 aa).

12-17 (EIGKTH) contributes to the ATP binding site. Thr-16 provides a ligand contact to Mg(2+). The active site involves Lys-37. Ser-41 is a binding site for substrate. Residues Asp-52 and 118 to 121 (EGVG) contribute to the ATP site. Mg(2+) contacts are provided by Asp-52 and Glu-118.

The protein belongs to the dethiobiotin synthetase family. Homodimer. Mg(2+) serves as cofactor.

It localises to the cytoplasm. It catalyses the reaction (7R,8S)-7,8-diammoniononanoate + CO2 + ATP = (4R,5S)-dethiobiotin + ADP + phosphate + 3 H(+). It functions in the pathway cofactor biosynthesis; biotin biosynthesis; biotin from 7,8-diaminononanoate: step 1/2. Catalyzes a mechanistically unusual reaction, the ATP-dependent insertion of CO2 between the N7 and N8 nitrogen atoms of 7,8-diaminopelargonic acid (DAPA, also called 7,8-diammoniononanoate) to form a ureido ring. The polypeptide is ATP-dependent dethiobiotin synthetase BioD (Acidiphilium cryptum (strain JF-5)).